The primary structure comprises 179 residues: Large ribosomal subunit protein uL5 (179 aa).

Belongs to the universal ribosomal protein uL5 family. As to quaternary structure, part of the 50S ribosomal subunit; part of the 5S rRNA/L5/L18/L25 subcomplex. Contacts the 5S rRNA and the P site tRNA. Forms a bridge to the 30S subunit in the 70S ribosome.

This is one of the proteins that bind and probably mediate the attachment of the 5S RNA into the large ribosomal subunit, where it forms part of the central protuberance. In the 70S ribosome it contacts protein S13 of the 30S subunit (bridge B1b), connecting the 2 subunits; this bridge is implicated in subunit movement. Contacts the P site tRNA; the 5S rRNA and some of its associated proteins might help stabilize positioning of ribosome-bound tRNAs. This is Large ribosomal subunit protein uL5 from Shewanella loihica (strain ATCC BAA-1088 / PV-4).